We begin with the raw amino-acid sequence, 554 residues long: Glucose-6-phosphate isomerase (554 aa).

Glu-359 serves as the catalytic Proton donor. Active-site residues include His-390 and Lys-518.

It belongs to the GPI family.

The protein resides in the cytoplasm. The catalysed reaction is alpha-D-glucose 6-phosphate = beta-D-fructose 6-phosphate. Its pathway is carbohydrate biosynthesis; gluconeogenesis. It functions in the pathway carbohydrate degradation; glycolysis; D-glyceraldehyde 3-phosphate and glycerone phosphate from D-glucose: step 2/4. Functionally, catalyzes the reversible isomerization of glucose-6-phosphate to fructose-6-phosphate. The polypeptide is Glucose-6-phosphate isomerase (Pseudomonas putida (strain GB-1)).